We begin with the raw amino-acid sequence, 1165 residues long: Leptin receptor (1165 aa).

Residues 1–21 form the signal peptide; sequence MICQKFCVVLLHWEFIYVITA. The Extracellular segment spans residues 22–839; the sequence is FNLSYPITPW…QDDIEKHQSD (818 aa). 6 N-linked (GlcNAc...) asparagine glycosylation sites follow: Asn-23, Asn-41, Asn-56, Asn-73, Asn-81, and Asn-98. Cystine bridges form between Cys-37/Cys-90, Cys-89/Cys-99, Cys-131/Cys-142, Cys-186/Cys-196, and Cys-188/Cys-193. Asn-187 carries an N-linked (GlcNAc...) asparagine glycan. Residues Asn-206, Asn-276, Asn-347, and Asn-397 are each glycosylated (N-linked (GlcNAc...) asparagine). The region spanning 239 to 333 is the Fibronectin type-III 1 domain; sequence PPLGLHMEIT…TPRVFTTQDV (95 aa). The 99-residue stretch at 331 to 429 folds into the Ig-like domain; that stretch reads QDVIYFPPKI…HRYAELYVID (99 aa). Intrachain disulfides connect Cys-352–Cys-412, Cys-413–Cys-418, Cys-436–Cys-447, Cys-473–Cys-528, and Cys-488–Cys-498. Residues 467–484 form a leptin-binding region; the sequence is HRSSLYCSDIPSIHPISE. Residues Asn-516, Asn-624, Asn-659, Asn-688, Asn-697, Asn-728, and Asn-750 are each glycosylated (N-linked (GlcNAc...) asparagine). Fibronectin type-III domains lie at 539–634, 639–732, and 740–833; these read PPSS…TVVM, PMRG…LTFS, and IVQS…QDDI. The WSXWS motif motif lies at 622–626; sequence WSNWS. Residues 840–862 form a helical membrane-spanning segment; the sequence is AGLYVIVPVIISSSILLLGTLLI. Over 863-1165 the chain is Cytoplasmic; sequence SHQRMKKLFW…MENKMCDLTV (303 aa). The Box 1 motif motif lies at 871 to 879; sequence FWEDVPNPK. Ser-882 is modified (phosphoserine). The tract at residues 893-898 is required for JAK2 activation; the sequence is ETFEHL. The tract at residues 898–906 is required for STAT3 phosphorylation; sequence LFIKHTASV. Tyr-986 is subject to Phosphotyrosine; by JAK2. Tyr-1079 carries the post-translational modification Phosphotyrosine. Phosphotyrosine; by JAK2 is present on Tyr-1141.

It belongs to the type I cytokine receptor family. Type 2 subfamily. Present as a mixture of monomers and dimers. The phosphorylated receptor binds a number of SH2 domain-containing proteins such as JAK2, STAT3, PTPN11, and SOCS3. Interaction with SOCS3 inhibits JAK/STAT signaling and MAPK cascade. On ligand binding, phosphorylated on two conserved C-terminal tyrosine residues (isoform B only) by JAK2. Tyr-986 is required for complete binding and activation of PTPN11, ERK/FOS activation,for interaction with SOCS3 and SOCS3 mediated inhibition of leptin signaling. Phosphorylation on Tyr-1141 is required for STAT3 binding/activation. Phosphorylation of Tyr-1079 has a more accessory role. As to expression, isoform A is expressed in fetal liver and in hematopoietic tissues and choroid plexus. In adults highest expression in heart, liver, small intestine, prostate and ovary. Low level in lung and kidney. Isoform B is highly expressed in hypothalamus, but also in skeletal muscle. Detected in fundic and antral epithelial cells of the gastric mucosa. Isoform B and isoform A are expressed by NK cells (at protein level).

It is found in the cell membrane. Its subcellular location is the basolateral cell membrane. The protein localises to the secreted. Receptor for hormone LEP/leptin. On ligand binding, mediates LEP central and peripheral effects through the activation of different signaling pathways such as JAK2/STAT3 and MAPK cascade/FOS. In the hypothalamus, LEP acts as an appetite-regulating factor that induces a decrease in food intake and an increase in energy consumption by inducing anorexinogenic factors and suppressing orexigenic neuropeptides, also regulates bone mass and secretion of hypothalamo-pituitary-adrenal hormones. In the periphery, increases basal metabolism, influences reproductive function, regulates pancreatic beta-cell function and insulin secretion, is pro-angiogenic and affects innate and adaptive immunity. Control of energy homeostasis and melanocortin production (stimulation of POMC and full repression of AgRP transcription) is mediated by STAT3 signaling, whereas distinct signals regulate NPY and the control of fertility, growth and glucose homeostasis. Involved in the regulation of counter-regulatory response to hypoglycemia by inhibiting neurons of the parabrachial nucleus. Has a specific effect on T lymphocyte responses, differentially regulating the proliferation of naive and memory T -ells. Leptin increases Th1 and suppresses Th2 cytokine production. Functionally, may transport LEP across the blood-brain barrier. Binds LEP and mediates LEP endocytosis. Does not induce phosphorylation of and activate STAT3. Its function is as follows. Antagonizes Isoform A and isoform B-mediated LEP binding and endocytosis. The chain is Leptin receptor (LEPR) from Homo sapiens (Human).